Reading from the N-terminus, the 63-residue chain is Conotoxin Gm5.1 (63 aa).

The N-terminal stretch at 1-21 is a signal peptide; sequence MRYLPVFVILLLLIASIPSDT. Residues 22 to 50 constitute a propeptide that is removed on maturation; that stretch reads VQLKTKDDMPLASFHGNGRRILRMLSNKR.

Belongs to the conotoxin T superfamily. Contains 2 disulfide bonds that can be either 'C1-C3, C2-C4' or 'C1-C4, C2-C3', since these disulfide connectivities have been observed for conotoxins with cysteine framework V (for examples, see AC P0DQQ7 and AC P81755). In terms of tissue distribution, expressed by the venom duct.

It localises to the secreted. The sequence is that of Conotoxin Gm5.1 from Conus gloriamaris (Glory-of-the-Sea cone).